The chain runs to 207 residues: Uracil phosphoribosyltransferase (207 aa).

Residues Arg77, Arg102, and 129–137 (DPMLATGGS) each bind 5-phospho-alpha-D-ribose 1-diphosphate. Residues Ile192 and 197–199 (GDA) each bind uracil. Asp198 lines the 5-phospho-alpha-D-ribose 1-diphosphate pocket.

It belongs to the UPRTase family. Requires Mg(2+) as cofactor.

It carries out the reaction UMP + diphosphate = 5-phospho-alpha-D-ribose 1-diphosphate + uracil. It functions in the pathway pyrimidine metabolism; UMP biosynthesis via salvage pathway; UMP from uracil: step 1/1. Its activity is regulated as follows. Allosterically activated by GTP. Its function is as follows. Catalyzes the conversion of uracil and 5-phospho-alpha-D-ribose 1-diphosphate (PRPP) to UMP and diphosphate. The protein is Uracil phosphoribosyltransferase of Mesoplasma florum (strain ATCC 33453 / NBRC 100688 / NCTC 11704 / L1) (Acholeplasma florum).